The following is a 502-amino-acid chain: Tyrosine-protein kinase receptor old-1 (502 aa).

The first 19 residues, 1–19, serve as a signal peptide directing secretion; sequence MKGTLIFVVFYSSYGFAHC. The Extracellular segment spans residues 20–58; it reads NTILRSSSLSRNFEDSLRRIPRSTDKDETGFEDSNVQEV. The chain crosses the membrane as a helical span at residues 59–79; the sequence is IFILLYCLFVALAILICGLII. Residues 80 to 502 lie on the Cytoplasmic side of the membrane; that stretch reads FYNSRKRELR…WLSDEKHCDS (423 aa). Residues 99-140 form a disordered region; it reads LLEPTSADHKRRNSSNIVPPEPTPYPITSGESDLRQTPSRLS. Polar residues predominate over residues 127–140; sequence SGESDLRQTPSRLS. The Protein kinase domain occupies 175 to 473; the sequence is ISKGRPLGSG…ELKTTSNEYF (299 aa). ATP is bound by residues 181 to 189 and Lys213; that span reads LGSGEFGII. Catalysis depends on Asp321, which acts as the Proton acceptor.

It belongs to the protein kinase superfamily. Tyr protein kinase family.

It localises to the cell membrane. The enzyme catalyses L-tyrosyl-[protein] + ATP = O-phospho-L-tyrosyl-[protein] + ADP + H(+). Functionally, receptor tyrosine kinase which plays a role in promoting longevity and resistance to stresses including UV irradiation and high temperatures, probably downstream of daf-16. The sequence is that of Tyrosine-protein kinase receptor old-1 from Caenorhabditis elegans.